Consider the following 167-residue polypeptide: Putative 4-hydroxy-4-methyl-2-oxoglutarate aldolase (167 aa).

Residues 81–84 (GDII) and Arg-103 contribute to the substrate site. Asp-104 is a binding site for a divalent metal cation.

It belongs to the class II aldolase/RraA-like family. Homotrimer. It depends on a divalent metal cation as a cofactor.

It catalyses the reaction 4-hydroxy-4-methyl-2-oxoglutarate = 2 pyruvate. The enzyme catalyses oxaloacetate + H(+) = pyruvate + CO2. Functionally, catalyzes the aldol cleavage of 4-hydroxy-4-methyl-2-oxoglutarate (HMG) into 2 molecules of pyruvate. Also contains a secondary oxaloacetate (OAA) decarboxylase activity due to the common pyruvate enolate transition state formed following C-C bond cleavage in the retro-aldol and decarboxylation reactions. This is Putative 4-hydroxy-4-methyl-2-oxoglutarate aldolase from Corynebacterium jeikeium (strain K411).